We begin with the raw amino-acid sequence, 115 residues long: NADH-ubiquinone oxidoreductase chain 3 (115 aa).

Transmembrane regions (helical) follow at residues 4 to 24, 55 to 75, and 84 to 104; these read IMAM…AFWL, FFLV…LLPL, and MFLT…GLAY.

The protein belongs to the complex I subunit 3 family. In terms of assembly, core subunit of respiratory chain NADH dehydrogenase (Complex I) which is composed of 45 different subunits. Interacts with TMEM186. Interacts with TMEM242.

Its subcellular location is the mitochondrion inner membrane. It carries out the reaction a ubiquinone + NADH + 5 H(+)(in) = a ubiquinol + NAD(+) + 4 H(+)(out). In terms of biological role, core subunit of the mitochondrial membrane respiratory chain NADH dehydrogenase (Complex I) which catalyzes electron transfer from NADH through the respiratory chain, using ubiquinone as an electron acceptor. Essential for the catalytic activity of complex I. In Phyllotis darwinii (Darwin's leaf-eared mouse), this protein is NADH-ubiquinone oxidoreductase chain 3.